The primary structure comprises 227 residues: MTLSFFDQFMSPTYLGIPLIAVALTLPWILFPTPSTRWLNNRLITLQGWFINRFTQQLLLPLNLGGHKWAVLLTSLMLFLITLNMLGLLPYTFTPTTQLSLNMGLAVPLWLATVIIGMRNQPTAALGHLLPEGTPVPLIPVLIIIETISLFIRPLALGVRLTANLTAGHLLIQLIATAAFVLMPIMPTVAILTSIVLFLLTLLEIAVAMIQAYVFVLLLSLYLQENV.

6 helical membrane-spanning segments follow: residues 12–32, 69–89, 98–118, 132–152, 180–200, and 202–222; these read PTYL…ILFP, WAVL…LGLL, QLSL…IIGM, EGTP…SLFI, FVLM…LFLL, and LLEI…LSLY.

Belongs to the ATPase A chain family. As to quaternary structure, component of the ATP synthase complex composed at least of ATP5F1A/subunit alpha, ATP5F1B/subunit beta, ATP5MC1/subunit c (homooctomer), MT-ATP6/subunit a, MT-ATP8/subunit 8, ATP5ME/subunit e, ATP5MF/subunit f, ATP5MG/subunit g, ATP5MK/subunit k, ATP5MJ/subunit j, ATP5F1C/subunit gamma, ATP5F1D/subunit delta, ATP5F1E/subunit epsilon, ATP5PF/subunit F6, ATP5PB/subunit b, ATP5PD/subunit d, ATP5PO/subunit OSCP. ATP synthase complex consists of a soluble F(1) head domain (subunits alpha(3) and beta(3)) - the catalytic core - and a membrane F(0) domain - the membrane proton channel (subunits c, a, 8, e, f, g, k and j). These two domains are linked by a central stalk (subunits gamma, delta, and epsilon) rotating inside the F1 region and a stationary peripheral stalk (subunits F6, b, d, and OSCP). Interacts with DNAJC30; interaction is direct.

Its subcellular location is the mitochondrion inner membrane. The catalysed reaction is H(+)(in) = H(+)(out). Functionally, subunit a, of the mitochondrial membrane ATP synthase complex (F(1)F(0) ATP synthase or Complex V) that produces ATP from ADP in the presence of a proton gradient across the membrane which is generated by electron transport complexes of the respiratory chain. ATP synthase complex consist of a soluble F(1) head domain - the catalytic core - and a membrane F(1) domain - the membrane proton channel. These two domains are linked by a central stalk rotating inside the F(1) region and a stationary peripheral stalk. During catalysis, ATP synthesis in the catalytic domain of F(1) is coupled via a rotary mechanism of the central stalk subunits to proton translocation. With the subunit c (ATP5MC1), forms the proton-conducting channel in the F(0) domain, that contains two crucial half-channels (inlet and outlet) that facilitate proton movement from the mitochondrial intermembrane space (IMS) into the matrix. Protons are taken up via the inlet half-channel and released through the outlet half-channel, following a Grotthuss mechanism. The sequence is that of ATP synthase F(0) complex subunit a from Salmo salar (Atlantic salmon).